The chain runs to 438 residues: Ribosomal protein uS12 methylthiotransferase RimO (438 aa).

The region spanning 6-118 is the MTTase N-terminal domain; sequence KQLCLISLGC…IDILIAKKQN (113 aa). [4Fe-4S] cluster-binding residues include cysteine 15, cysteine 49, cysteine 81, cysteine 150, cysteine 154, and cysteine 157. The region spanning 136 to 364 is the Radical SAM core domain; that stretch reads TGSSVHAYVK…NKIALKHQHN (229 aa).

The protein belongs to the methylthiotransferase family. RimO subfamily. [4Fe-4S] cluster is required as a cofactor.

Its subcellular location is the cytoplasm. It carries out the reaction L-aspartate(89)-[ribosomal protein uS12]-hydrogen + (sulfur carrier)-SH + AH2 + 2 S-adenosyl-L-methionine = 3-methylsulfanyl-L-aspartate(89)-[ribosomal protein uS12]-hydrogen + (sulfur carrier)-H + 5'-deoxyadenosine + L-methionine + A + S-adenosyl-L-homocysteine + 2 H(+). Functionally, catalyzes the methylthiolation of an aspartic acid residue of ribosomal protein uS12. The chain is Ribosomal protein uS12 methylthiotransferase RimO from Helicobacter acinonychis (strain Sheeba).